A 66-amino-acid chain; its full sequence is Cold shock-like protein CspLA (66 aa).

The 60-residue stretch at 4 to 63 (GTVKWFNAEKGFGFIERENGDDVFVHFSAIQGDGFKSLDEGQAVTFDVEEGQRGPQAANV) folds into the CSD domain.

Homodimer.

It is found in the cytoplasm. This chain is Cold shock-like protein CspLA (cspLA), found in Listeria innocua serovar 6a (strain ATCC BAA-680 / CLIP 11262).